Reading from the N-terminus, the 345-residue chain is High mobility group protein 20A (345 aa).

2 disordered regions span residues 1-124 (MENT…TERP) and 167-198 (QYQNTDAYQTYSRKAQSRQKGRQQRQEGVRGV). Polar residues-rich tracts occupy residues 32 to 48 (LSGSSQAPFHPQSPTLQ) and 57 to 67 (LQQSGEQQLGN). A compositionally biased stretch (basic residues) spans 80 to 94 (TRRGGWTKGRKRKRS). Residues 101 to 169 (PKAPLTGYVR…RYTKELQQYQ (69 aa)) constitute a DNA-binding region (HMG box). Residues 112–124 (MNERREQLRTERP) are compositionally biased toward basic and acidic residues. Polar residues predominate over residues 167-180 (QYQNTDAYQTYSRK). Residues 227-290 (SKAREAELRQ…QHLQSVRQAL (64 aa)) adopt a coiled-coil conformation.

Its subcellular location is the nucleus. Plays a role in neuronal differentiation. The polypeptide is High mobility group protein 20A (hmg20a) (Xenopus tropicalis (Western clawed frog)).